The sequence spans 124 residues: Large ribosomal subunit protein bL19 (124 aa).

This sequence belongs to the bacterial ribosomal protein bL19 family.

Its function is as follows. This protein is located at the 30S-50S ribosomal subunit interface and may play a role in the structure and function of the aminoacyl-tRNA binding site. In Orientia tsutsugamushi (strain Ikeda) (Rickettsia tsutsugamushi), this protein is Large ribosomal subunit protein bL19.